The primary structure comprises 600 residues: Probable methyltransferase PMT7 (600 aa).

Residues 1 to 15 (MGGGYVLFGSARSGQ) are Cytoplasmic-facing. A helical; Signal-anchor for type II membrane protein transmembrane segment spans residues 16 to 36 (MIMVALVLMVGSFYAGSIFGN). The Lumenal segment spans residues 37–600 (NSPIYISQPS…FCRKKFWAIL (564 aa)). N-linked (GlcNAc...) asparagine glycosylation is found at N49, N98, N110, N157, N200, N204, N334, N447, and N484.

The protein belongs to the methyltransferase superfamily.

The protein resides in the golgi apparatus membrane. The polypeptide is Probable methyltransferase PMT7 (Arabidopsis thaliana (Mouse-ear cress)).